A 214-amino-acid chain; its full sequence is tRNA (guanine-N(7)-)-methyltransferase (214 aa).

4 residues coordinate S-adenosyl-L-methionine: glutamate 44, glutamate 69, aspartate 96, and aspartate 118. Aspartate 118 is an active-site residue. A substrate-binding site is contributed by lysine 122. Positions 124-129 (RHEKRR) are interaction with RNA. Substrate-binding positions include aspartate 154 and 192-195 (TEYE).

The protein belongs to the class I-like SAM-binding methyltransferase superfamily. TrmB family.

The enzyme catalyses guanosine(46) in tRNA + S-adenosyl-L-methionine = N(7)-methylguanosine(46) in tRNA + S-adenosyl-L-homocysteine. It participates in tRNA modification; N(7)-methylguanine-tRNA biosynthesis. In terms of biological role, catalyzes the formation of N(7)-methylguanine at position 46 (m7G46) in tRNA. This Lactiplantibacillus plantarum (strain ATCC BAA-793 / NCIMB 8826 / WCFS1) (Lactobacillus plantarum) protein is tRNA (guanine-N(7)-)-methyltransferase.